The following is a 175-amino-acid chain: Bifunctional protein PyrR (175 aa).

The short motif at 97–109 (IVLIDDVLFTGRT) is the PRPP-binding element.

It belongs to the purine/pyrimidine phosphoribosyltransferase family. PyrR subfamily. In terms of assembly, homodimer and homohexamer; in equilibrium.

The catalysed reaction is UMP + diphosphate = 5-phospho-alpha-D-ribose 1-diphosphate + uracil. Its function is as follows. Regulates transcriptional attenuation of the pyrimidine nucleotide (pyr) operon by binding in a uridine-dependent manner to specific sites on pyr mRNA. This disrupts an antiterminator hairpin in the RNA and favors formation of a downstream transcription terminator, leading to a reduced expression of downstream genes. Functionally, also displays a weak uracil phosphoribosyltransferase activity which is not physiologically significant. This chain is Bifunctional protein PyrR, found in Leuconostoc citreum (strain KM20).